A 461-amino-acid polypeptide reads, in one-letter code: MKKMSLFQNMKSKLLPIAAVSVLTAGIFAGAELQQTEKASAKKQDKAEIRNVIVMIGDGMGTPYIRAYRSMKNNGDTPNNPKLTEFDRNLTGMMMTHPDDPDYNITDSAAAGTALATGVKTYNNAIGVDKNGKKVKSVLEEAKQQGKSTGLVATSEINHATPAAYGAHNESRKNMDQIANSYMDDKIKGKHKIDVLLGGGKSYFNRKDRNLTKEFKQAGYSYVTTKQALKKNKDQQVLGLFADGGLAKALDRDSKTPSLKDMTVSAIDRLNQNKKGFFLMVEGSQIDWAAHDNDTVGAMSEVKDFEQAYKAAIEFAKKDKHTLVIATADHTTGGFTIGANGEKNWHAEPILSAKKTPEFMAKKISEGKPVKDVLARYANLKVTSEEIKSVEAAAQADKSKGASKAIIKIFNTRSNSGWTSTDHTGEEVPVYAYGPGKEKFRGLINNTDQANIIFKILKTGK.

Positions 1–41 (MKKMSLFQNMKSKLLPIAAVSVLTAGIFAGAELQQTEKASA) are cleaved as a signal peptide. Asp-58 serves as a coordination point for Mg(2+). Asp-58 contacts Zn(2+). Ser-108 functions as the Phosphoserine intermediate in the catalytic mechanism. The Mg(2+) site is built by Thr-161 and Glu-282. Zn(2+)-binding residues include Asp-287, His-291, Asp-329, His-330, and His-423.

The protein belongs to the alkaline phosphatase family. Monomer. Requires Mg(2+) as cofactor. It depends on Zn(2+) as a cofactor.

The enzyme catalyses a phosphate monoester + H2O = an alcohol + phosphate. This is Alkaline phosphatase 4 (phoA) from Bacillus subtilis (strain 168).